The following is a 305-amino-acid chain: Protein FdhE homolog (305 aa).

The protein belongs to the FdhE family.

It is found in the cytoplasm. Necessary for formate dehydrogenase activity. This Haemophilus ducreyi (strain 35000HP / ATCC 700724) protein is Protein FdhE homolog.